The sequence spans 186 residues: Putative adenylate kinase (186 aa).

Glycine 10, glycine 12, lysine 13, threonine 14, and serine 15 together coordinate ATP. The segment at 30 to 53 (HLNELIKEEHLYTEVDEKRDSVVA) is NMP. The LID stretch occupies residues 108 to 118 (KRGYSEEKVNE). Arginine 109 provides a ligand contact to ATP.

It belongs to the adenylate kinase family. AK6 subfamily. In terms of assembly, interacts with uS11. Not a structural component of 40S pre-ribosomes, but transiently interacts with them by binding to uS11.

The catalysed reaction is AMP + ATP = 2 ADP. It carries out the reaction ATP + H2O = ADP + phosphate + H(+). Broad-specificity nucleoside monophosphate (NMP) kinase that catalyzes the reversible transfer of the terminal phosphate group between nucleoside triphosphates and monophosphates. Also has ATPase activity. Involved in the late maturation steps of the 30S ribosomal particles, specifically 16S rRNA maturation. While NMP activity is not required for ribosome maturation, ATPase activity is. Associates transiently with small ribosomal subunit protein uS11. ATP hydrolysis breaks the interaction with uS11. May temporarily remove uS11 from the ribosome to enable a conformational change of the ribosomal RNA that is needed for the final maturation step of the small ribosomal subunit. The protein is Putative adenylate kinase of Methanosarcina acetivorans (strain ATCC 35395 / DSM 2834 / JCM 12185 / C2A).